The following is a 161-amino-acid chain: Cytochrome c-type biogenesis protein CcmE (161 aa).

Residues 1 to 8 are Cytoplasmic-facing; that stretch reads MNPRRKKR. Residues 9–29 traverse the membrane as a helical; Signal-anchor for type II membrane protein segment; the sequence is LGIVLAIFIGISATIGLMLYA. The Periplasmic segment spans residues 30-161; that stretch reads LNQNMDLFYT…SSEQKQGSGE (132 aa). Heme-binding residues include His129 and Tyr133. Positions 142–161 are disordered; that stretch reads MKKTHEPLQYSSEQKQGSGE. Residues 150 to 161 show a composition bias toward polar residues; sequence QYSSEQKQGSGE.

It belongs to the CcmE/CycJ family.

Its subcellular location is the cell inner membrane. In terms of biological role, heme chaperone required for the biogenesis of c-type cytochromes. Transiently binds heme delivered by CcmC and transfers the heme to apo-cytochromes in a process facilitated by CcmF and CcmH. The sequence is that of Cytochrome c-type biogenesis protein CcmE from Vibrio parahaemolyticus serotype O3:K6 (strain RIMD 2210633).